The chain runs to 326 residues: Glycerol-3-phosphate dehydrogenase [NAD(P)+] (326 aa).

3 residues coordinate NADPH: Trp15, Arg35, and Lys107. Sn-glycerol 3-phosphate is bound by residues Lys107, Gly135, and Ser137. Residue Ala139 participates in NADPH binding. Sn-glycerol 3-phosphate is bound by residues Lys190, Asp243, Ser253, Arg254, and Asn255. Lys190 serves as the catalytic Proton acceptor. NADPH is bound at residue Arg254. NADPH-binding residues include Leu273 and Glu275.

The protein belongs to the NAD-dependent glycerol-3-phosphate dehydrogenase family.

It localises to the cytoplasm. The enzyme catalyses sn-glycerol 3-phosphate + NAD(+) = dihydroxyacetone phosphate + NADH + H(+). It catalyses the reaction sn-glycerol 3-phosphate + NADP(+) = dihydroxyacetone phosphate + NADPH + H(+). The protein operates within membrane lipid metabolism; glycerophospholipid metabolism. Functionally, catalyzes the reduction of the glycolytic intermediate dihydroxyacetone phosphate (DHAP) to sn-glycerol 3-phosphate (G3P), the key precursor for phospholipid synthesis. The sequence is that of Glycerol-3-phosphate dehydrogenase [NAD(P)+] from Bradyrhizobium sp. (strain BTAi1 / ATCC BAA-1182).